Here is a 151-residue protein sequence, read N- to C-terminus: Small ribosomal subunit protein uS11 (151 aa).

This sequence belongs to the universal ribosomal protein uS11 family.

The sequence is that of Small ribosomal subunit protein uS11 (RPS14) from Podocoryna carnea (Hydrozoan).